The primary structure comprises 236 residues: tRNA1(Val) (adenine(37)-N6)-methyltransferase (236 aa).

The protein belongs to the methyltransferase superfamily. tRNA (adenine-N(6)-)-methyltransferase family.

The protein resides in the cytoplasm. The catalysed reaction is adenosine(37) in tRNA1(Val) + S-adenosyl-L-methionine = N(6)-methyladenosine(37) in tRNA1(Val) + S-adenosyl-L-homocysteine + H(+). Its function is as follows. Specifically methylates the adenine in position 37 of tRNA(1)(Val) (anticodon cmo5UAC). The chain is tRNA1(Val) (adenine(37)-N6)-methyltransferase from Shewanella sp. (strain MR-4).